The following is a 309-amino-acid chain: MAGTGVVAVYGEGAMTETKQKSPFSVKVGLAQMLRGGVIMDVVNAEQARIAEEAGACAVMALERVPADIRAQGGVARMSDPEMIKEIKNAVTIPVMAKARIGHFVEAQILEAIGVDYVDESEVLTLADEDNHINKHNFKIPFVCGCRNLGEALRRIREGAAMIRTKGEAGTGNVVEAVRHVRSVNGAIRLLRSMDDDEVFTYAKKIAAPYDLVVQTKELGRLPVVQFAAGGVATPADAALMMQLGCDGVFVGSGVFKSGDPVKRAKAIVQAVTNYRDAAVLAEVSCGLGEAMVGLNLDDKVERFASRSE.

An N-acetylmethionine modification is found at Met1. Asp41 lines the D-ribose 5-phosphate pocket. Residue Lys98 is the Schiff-base intermediate with D-ribose 5-phosphate of the active site. A D-ribose 5-phosphate-binding site is contributed by Gly170. Position 182 (Arg182) interacts with D-glyceraldehyde 3-phosphate. D-ribose 5-phosphate-binding positions include Gly231 and 252–253 (GS).

The protein belongs to the PdxS/SNZ family. As to quaternary structure, homodimer or heterodimer with PDX1.2 or PDX1.3. Interacts with PDX2. Expressed in flowers, shoots, leaves and weakly in roots.

Its subcellular location is the cytoplasm. The enzyme catalyses aldehydo-D-ribose 5-phosphate + D-glyceraldehyde 3-phosphate + L-glutamine = pyridoxal 5'-phosphate + L-glutamate + phosphate + 3 H2O + H(+). The protein operates within cofactor biosynthesis; pyridoxal 5'-phosphate biosynthesis. Catalyzes the formation of pyridoxal 5'-phosphate from ribose 5-phosphate (RBP), glyceraldehyde 3-phosphate (G3P) and ammonia. The ammonia is provided by PDX2. Can also use ribulose 5-phosphate and dihydroxyacetone phosphate as substrates, resulting from enzyme-catalyzed isomerization of RBP and G3P, respectively. Also plays an indirect role in resistance to singlet oxygen-generating photosensitizers. The chain is Pyridoxal 5'-phosphate synthase subunit PDX1.1 (PDX11) from Arabidopsis thaliana (Mouse-ear cress).